The primary structure comprises 104 residues: Large ribosomal subunit protein uL24 (104 aa).

It belongs to the universal ribosomal protein uL24 family. As to quaternary structure, part of the 50S ribosomal subunit.

Functionally, one of two assembly initiator proteins, it binds directly to the 5'-end of the 23S rRNA, where it nucleates assembly of the 50S subunit. One of the proteins that surrounds the polypeptide exit tunnel on the outside of the subunit. The protein is Large ribosomal subunit protein uL24 of Pectobacterium atrosepticum (strain SCRI 1043 / ATCC BAA-672) (Erwinia carotovora subsp. atroseptica).